Here is a 220-residue protein sequence, read N- to C-terminus: Metalloproteinase inhibitor 2 (220 aa).

The signal sequence occupies residues 1 to 26 (MGAAARSLRLALGLLLLATLLRPADA). Cys-27 is a Zn(2+) binding site. Involved in metalloproteinase-binding stretches follow at residues 27 to 30 (CSCS) and 95 to 96 (SA). 6 disulfides stabilise this stretch: Cys-27–Cys-98, Cys-29–Cys-127, Cys-39–Cys-152, Cys-154–Cys-201, Cys-159–Cys-164, and Cys-172–Cys-193. Residues 27-152 (CSCSPVHPQQ…SLNHRYQMGC (126 aa)) form the NTR domain.

The protein belongs to the protease inhibitor I35 (TIMP) family. As to quaternary structure, interacts (via the C-terminal) with MMP2 (via the C-terminal PEX domain); the interaction inhibits the MMP2 activity. The activity of TIMP2 is dependent on the presence of disulfide bonds.

It is found in the secreted. Functionally, complexes with metalloproteinases (such as collagenases) and irreversibly inactivates them by binding to their catalytic zinc cofactor. This is Metalloproteinase inhibitor 2 (Timp2) from Rattus norvegicus (Rat).